We begin with the raw amino-acid sequence, 77 residues long: Protein AC43 (77 aa).

Its function is as follows. Plays a role in the production of occlusion bodies as well as expression of the polyhedrin gene. This chain is Protein AC43, found in Autographa californica nuclear polyhedrosis virus (AcMNPV).